A 100-amino-acid polypeptide reads, in one-letter code: Urease subunit gamma (100 aa).

Belongs to the urease gamma subunit family. As to quaternary structure, heterotrimer of UreA (gamma), UreB (beta) and UreC (alpha) subunits. Three heterotrimers associate to form the active enzyme.

Its subcellular location is the cytoplasm. The catalysed reaction is urea + 2 H2O + H(+) = hydrogencarbonate + 2 NH4(+). Its pathway is nitrogen metabolism; urea degradation; CO(2) and NH(3) from urea (urease route): step 1/1. This Prochlorococcus marinus subsp. pastoris (strain CCMP1986 / NIES-2087 / MED4) protein is Urease subunit gamma.